Consider the following 740-residue polypeptide: MSSAVRIVEKQLDEILAIARNPAQIRNAGTLAHVDHGKTTTTDSLLMGAGLLSPKVAGKALAMDFVAIEQLRQMTVKAANISLYFEYGGKPYLVNFVDTPGHVDFTGHVTRSLRVMDGGLVVVDSVEGVMTQTETVVRQALEEYVRPVLFINKIDRLIKELRLSPQEIQQRILTIVKDFNALIDMFAPPEFKDKWKVDPAKGQVALGSALHKWGITIPMAQKAGLKFSNIVDAYEKGYVDKLGEEFPLYKTLLTMIIEHVPPPNVAQKYRIPRLWRGDLNSEVGKAMLEADPNGPTVIAVSKVNKDPHAGLIATGRVFSGTIREGDEVYIIGRKMKKKVLQTYIYMGPTRIIVPYMPAGNIVALMGVDEARAGDTLVDPRLTEVPPFEKMRYIAEPVVTVAIEPKNPAELAKLVEALKDLVIEDPTLDLKIDQETGQILLSGVGTLHLEIATWLLKERAKTEFTVSPPLIRFRETVRERSQVWEGKSPNKHNKLYFYVEPLDETTVELIATKEITEEQDPRERAKILREKAGWDTDEARGIWAIDDRYFNVIVDKTTGIQYLREIRDYIVQGFRWAMEAGPLAQEPMRGVKVVLVDAVVHEDPAHRGPAQIMPATKNAIFAAVLSARPTLLEPLVRLDIKVAPDYIGSVTSVLNKHRGKILDMTQQEYMAYLRAELPVLESFTISDELRAAAAGKIFWSMQFARWAPYPESMLVDFVKQLRKKKGLKEDIPKPTDFVEVF.

The 242-residue stretch at 23 to 264 (AQIRNAGTLA…MIIEHVPPPN (242 aa)) folds into the tr-type G domain. Residues 32–39 (AHVDHGKT), 98–102 (DTPGH), and 152–155 (NKID) contribute to the GTP site. Histidine 605 carries the diphthamide modification.

The protein belongs to the TRAFAC class translation factor GTPase superfamily. Classic translation factor GTPase family. EF-G/EF-2 subfamily.

It is found in the cytoplasm. Its function is as follows. Catalyzes the GTP-dependent ribosomal translocation step during translation elongation. During this step, the ribosome changes from the pre-translocational (PRE) to the post-translocational (POST) state as the newly formed A-site-bound peptidyl-tRNA and P-site-bound deacylated tRNA move to the P and E sites, respectively. Catalyzes the coordinated movement of the two tRNA molecules, the mRNA and conformational changes in the ribosome. The protein is Elongation factor 2 of Pyrobaculum arsenaticum (strain DSM 13514 / JCM 11321 / PZ6).